Consider the following 175-residue polypeptide: Catabolic 3-dehydroquinase (175 aa).

Y23 (proton acceptor) is an active-site residue. Substrate-binding residues include N74, H80, and D87. Residue H100 is the Proton donor of the active site. Substrate contacts are provided by residues 101 to 102 and R111; that span reads IS.

The protein belongs to the type-II 3-dehydroquinase family. Homododecamer. Adopts a ring-like structure, composed of an arrangement of two hexameric rings stacked on top of one another.

It carries out the reaction 3-dehydroquinate = 3-dehydroshikimate + H2O. The protein operates within aromatic compound metabolism; 3,4-dihydroxybenzoate biosynthesis; 3,4-dihydroxybenzoate from 3-dehydroquinate: step 1/2. Functionally, is involved in the catabolism of quinate. Allows the utilization of quinate as carbon source via the beta-ketoadipate pathway. The protein is Catabolic 3-dehydroquinase of Talaromyces marneffei (strain ATCC 18224 / CBS 334.59 / QM 7333) (Penicillium marneffei).